The primary structure comprises 434 residues: ATP-dependent RNA helicase RhlB (434 aa).

Residues 9–37 carry the Q motif motif; that stretch reads KKFADFPLKPEILAALNENGFEFCTPIQA. One can recognise a Helicase ATP-binding domain in the interval 40–219; it reads LPILLNAKDI…YDHMNDPEKV (180 aa). 53 to 60 lines the ATP pocket; that stretch reads AQTGTGKT. The DEAD box signature appears at 165–168; that stretch reads DEAD. The region spanning 243–390 is the Helicase C-terminal domain; it reads KMRLLLSLIE…VSNYDKDALL (148 aa). A disordered region spans residues 390–434; that stretch reads LDDIPPPARIHRKPPTSRTRDGGSKGAHRSGGNTSRPPRHRTRRP.

It belongs to the DEAD box helicase family. RhlB subfamily. In terms of assembly, component of the RNA degradosome, which is a multiprotein complex involved in RNA processing and mRNA degradation.

It localises to the cytoplasm. The enzyme catalyses ATP + H2O = ADP + phosphate + H(+). Functionally, DEAD-box RNA helicase involved in RNA degradation. Has RNA-dependent ATPase activity and unwinds double-stranded RNA. This is ATP-dependent RNA helicase RhlB from Shewanella frigidimarina (strain NCIMB 400).